Consider the following 81-residue polypeptide: MNVEHEVNLLVEEIHRLGSKNADGKLSVKFGVLFQDDRCANLFEALVGTLKAAKRRKIVTYAGELLLQGVHDDVDIVLLQD.

M1 is modified (N-acetylmethionine).

The protein belongs to the costars family.

The chain is Costars family protein ABRACL (Abracl) from Mus musculus (Mouse).